Here is a 437-residue protein sequence, read N- to C-terminus: Minor capsid protein p49 (437 aa).

Belongs to the asfivirus p49 structural protein family.

It localises to the virion. Together with the penton and the other minor capsid proteins (M1249L, p17), forms a complicated network immediately below the outer capsid shell, stabilizing the whole capsid. Plays an essential role in the formation of infectious virus particles. Especially required for the formation of the capsid vertices. During virion assembly, associates with the membrane and probably mediates the docking of the penton complex to the inner membrane, where it recruits the capsomers to form the penton core. The chain is Minor capsid protein p49 from Ornithodoros (relapsing fever ticks).